We begin with the raw amino-acid sequence, 326 residues long: DNA-directed RNA polymerase subunit alpha (326 aa).

The tract at residues 1–231 (MQTNLLKPKI…DQLVVFAALE (231 aa)) is alpha N-terminal domain (alpha-NTD). The interval 247 to 326 (VDPMLMRPVD…ESWPPANLEK (80 aa)) is alpha C-terminal domain (alpha-CTD).

Belongs to the RNA polymerase alpha chain family. In terms of assembly, homodimer. The RNAP catalytic core consists of 2 alpha, 1 beta, 1 beta' and 1 omega subunit. When a sigma factor is associated with the core the holoenzyme is formed, which can initiate transcription.

It catalyses the reaction RNA(n) + a ribonucleoside 5'-triphosphate = RNA(n+1) + diphosphate. DNA-dependent RNA polymerase catalyzes the transcription of DNA into RNA using the four ribonucleoside triphosphates as substrates. The sequence is that of DNA-directed RNA polymerase subunit alpha from Polynucleobacter asymbioticus (strain DSM 18221 / CIP 109841 / QLW-P1DMWA-1) (Polynucleobacter necessarius subsp. asymbioticus).